Consider the following 325-residue polypeptide: MEIFDYDNILLLPRKCRVESRSECDASVELGRQRFRIPVVPANMKTVVDESICVWLAQNSYFYVMHRFDLDNVQFVKNMKARGLYASISLGVKKPDYDTVDQLLALGLVPDYITIDIAHGHADSVKNMIGYLKEKMPTVFIIAGNVATPEAVIDLENWGADATKVGIGPGKVCITKLKTGFGTGGWQLSAVKWCARVATKPIIADGGIHEHGDIAKSIRFGATMVMIGSMLAGHEESPGKSVEVDGKLYKEYYGSASDFNKGEYKHVEGKRILEPVKGKLADTLIEMEQDVQSSISYSGGKRLMDIRKVNYVTLGGDNAGEHLLM.

C173 functions as the Thioimidate intermediate in the catalytic mechanism. Residue 202-225 coordinates NADP(+); the sequence is IIADGGIHEHGDIAKSIRFGATMV.

Belongs to the IMPDH/GMPR family. GuaC type 2 subfamily.

It catalyses the reaction IMP + NH4(+) + NADP(+) = GMP + NADPH + 2 H(+). Catalyzes the irreversible NADPH-dependent deamination of GMP to IMP. It functions in the conversion of nucleobase, nucleoside and nucleotide derivatives of G to A nucleotides, and in maintaining the intracellular balance of A and G nucleotides. This chain is GMP reductase, found in Albidiferax ferrireducens (strain ATCC BAA-621 / DSM 15236 / T118) (Rhodoferax ferrireducens).